A 397-amino-acid polypeptide reads, in one-letter code: Ornithine aminotransferase (397 aa).

Position 255 is an N6-(pyridoxal phosphate)lysine (lysine 255).

This sequence belongs to the class-III pyridoxal-phosphate-dependent aminotransferase family. OAT subfamily. It depends on pyridoxal 5'-phosphate as a cofactor.

The protein localises to the cytoplasm. It catalyses the reaction a 2-oxocarboxylate + L-ornithine = L-glutamate 5-semialdehyde + an L-alpha-amino acid. It participates in amino-acid biosynthesis; L-proline biosynthesis; L-glutamate 5-semialdehyde from L-ornithine: step 1/1. Functionally, catalyzes the interconversion of ornithine to glutamate semialdehyde. This Macrococcus caseolyticus (strain JCSC5402) (Macrococcoides caseolyticum) protein is Ornithine aminotransferase.